We begin with the raw amino-acid sequence, 805 residues long: Replication restart protein PriA (805 aa).

The interval 1 to 110 (MNFAEVIVDV…QAMLPAALKA (110 aa)) is 3'BD. The interval 111–166 (KYEKELKIAHGADLPPQVERLFSETKTLLYSDIPDHETLKLIQRHVQKGDIDVTYK) is linker. A WH region spans residues 167-253 (VAQKTNKKMV…KESYEEVYRD (87 aa)). Residues 282–448 (TLDSDEHKVF…QKGVYELLSL (167 aa)) enclose the Helicase ATP-binding domain. Residue 295–302 (GVTGSGKT) participates in ATP binding. The DEAH box motif lies at 391 to 394 (DEEH). Zn(2+) is bound by residues Cys-510, Cys-513, Cys-519, Cys-522, Cys-537, Cys-540, Cys-550, and Cys-553. The Helicase C-terminal domain occupies 545 to 699 (PVPHTCPECA…TFYQHEMAHR (155 aa)).

This sequence belongs to the helicase family. PriA subfamily. In terms of assembly, monomer. Component of the replication restart primosome which assembles in this order; PriA, DnaD then DnaB. The preferred DNA substrate mimics an arrested DNA replication fork with unreplicated lagging strand. Interacts with DnaD but not DnaB. Interacts with SSB (sbbA) via the latter's 35 residue C-terminal tail which tethers PriA to ssDNA. Colocalizes with DNA pol III subunit gamma/tau (dnaX). May interact with RarA. Zn(2+) is required as a cofactor.

Its subcellular location is the cytoplasm. It is found in the nucleoid. The catalysed reaction is Couples ATP hydrolysis with the unwinding of duplex DNA by translocating in the 3'-5' direction.. It catalyses the reaction ATP + H2O = ADP + phosphate + H(+). Functionally, initiates the restart of stalled replication forks, which reloads the replicative helicase on sites other than the origin of replication. Recognizes and binds to abandoned replication forks and remodels them to uncover a helicase loading site. Promotes assembly of the primosome at these replication forks. Serves as the initiating protein for assembly of the replication restart primosome; binding of PriA to an arrested DNA replication fork with unreplicated lagging strand triggers assembly. Sequentially DnaD (possibly as a dimer) and DnaB homotetramers bind. Assembly probably continues by loading of the DnaC replicative helicase aided by helicase loader DnaI. A single-strand (ss)DNA-dependent ATPase with helicase activity. Recognizes and binds the arrested nascent DNA chain at stalled replication forks. Binds forked DNA substrates and makes a larger complex with RarA; RarA has no effect on the helicase function. Binds ssDNA, D-loops and replication fork-like substrates but not double-stranded (ds)DNA; the preferred DNA substrate mimics an arrested DNA replication fork with an unreplicated lagging strand. Recognizes nicked dsDNA. A supershift on ssDNA occurs in the presence of single-stranded binding protein (SSB). Cannot substitute for E.coli PriA. Its function is as follows. Required for replication of plasmids that have a rolling circle mechanism, which produces circular single-stranded (ss)DNA intermediates corresponding to the lagging strand template, which are then converted into double-stranded (ds)DNA; priA is required to activate the conversion of ssDNA into dsDNA. This is Replication restart protein PriA from Bacillus subtilis (strain 168).